The chain runs to 34 residues: MPVNDLGAIATALFVFIPCVFLILLYAQTASRGS.

A helical transmembrane segment spans residues 6 to 26 (LGAIATALFVFIPCVFLILLY).

The protein belongs to the PsbM family. In terms of assembly, PSII is composed of 1 copy each of membrane proteins PsbA, PsbB, PsbC, PsbD, PsbE, PsbF, PsbH, PsbI, PsbJ, PsbK, PsbL, PsbM, PsbT, PsbX, PsbY, PsbZ, Psb30/Ycf12, peripheral proteins PsbO, CyanoQ (PsbQ), PsbU, PsbV and a large number of cofactors. It forms dimeric complexes.

The protein localises to the cellular thylakoid membrane. In terms of biological role, one of the components of the core complex of photosystem II (PSII). PSII is a light-driven water:plastoquinone oxidoreductase that uses light energy to abstract electrons from H(2)O, generating O(2) and a proton gradient subsequently used for ATP formation. It consists of a core antenna complex that captures photons, and an electron transfer chain that converts photonic excitation into a charge separation. This subunit is found at the monomer-monomer interface. In Acaryochloris marina (strain MBIC 11017), this protein is Photosystem II reaction center protein M.